The sequence spans 359 residues: Type-1 angiotensin II receptor (359 aa).

Over 1 to 25 the chain is Extracellular; it reads MILNSSTEDGIKRIQDDCPKAGRHS. Residue Asn4 is glycosylated (N-linked (GlcNAc...) asparagine). Positions 15 and 17 each coordinate angiotensin II. 2 cysteine pairs are disulfide-bonded: Cys18/Cys274 and Cys101/Cys180. The helical transmembrane segment at 26–55 threads the bilayer; sequence YIFVMIPTLYSIIFVVGIFGNSLVVIVIYF. Residues 56–61 lie on the Cytoplasmic side of the membrane; the sequence is YMKLKT. A helical membrane pass occupies residues 62–89; that stretch reads VASVFLLNLALADICFLLTLPLWAVYTA. The Extracellular segment spans residues 90-98; that stretch reads MEYRWPFGN. The helical transmembrane segment at 99 to 125 threads the bilayer; that stretch reads YLCKIASASVSFNLYASVFLLTCLSID. Residues 126 to 141 are Cytoplasmic-facing; sequence RYLAIVHPMKSRLRRT. Residues 142-165 form a helical membrane-spanning segment; that stretch reads MLVAKVTCVIIWLMAGLASLPAVI. Residues 166-190 lie on the Extracellular side of the membrane; it reads HRNVFFIENTNITVCAFHYESQNST. Arg167 contacts angiotensin II. Asn176 carries an N-linked (GlcNAc...) asparagine glycan. Residues Phe182, His183, and Tyr184 each contribute to the angiotensin II site. N-linked (GlcNAc...) asparagine glycosylation occurs at Asn188. Residues 191 to 216 traverse the membrane as a helical segment; the sequence is LPIGLGLTKNILGFMFPFLIILTSYT. An angiotensin II-binding site is contributed by Lys199. Residues 217–239 lie on the Cytoplasmic side of the membrane; that stretch reads LIWKALKKAYEIQKNKPRNDDIF. Residues 240–268 form a helical membrane-spanning segment; sequence KIIMAIVLFFFFSWVPHQIFTFLDVLIQL. The Extracellular portion of the chain corresponds to 269–278; it reads GIIHDCKISD. A helical membrane pass occupies residues 279–304; it reads IVDTAMPITICIAYFNNCLNPLFYGF. Residues 305–359 lie on the Cytoplasmic side of the membrane; that stretch reads LGKKFKKYFLQLLKYIPPKAKSHSTLSTKMSTLSYRPSDNVSSSAKKPVQCFEVE. The span at 337–349 shows a compositional bias: polar residues; sequence LSYRPSDNVSSSA. Residues 337–359 form a disordered region; it reads LSYRPSDNVSSSAKKPVQCFEVE. Cys355 is lipidated: S-palmitoyl cysteine.

Belongs to the G-protein coupled receptor 1 family. Interacts with MAS1. Interacts with ARRB1. Interacts with FLNA (via filamin repeat 21); increases PKA-mediated phosphorylation of FLNA. Post-translationally, C-terminal Ser or Thr residues may be phosphorylated. In terms of tissue distribution, expressed in liver, kidney, adrenal gland, heart and colon.

The protein resides in the cell membrane. Receptor for angiotensin II, a vasoconstricting peptide, which acts as a key regulator of blood pressure and sodium retention by the kidney. The activated receptor in turn couples to G-alpha proteins G(q) (GNAQ, GNA11, GNA14 or GNA15) and thus activates phospholipase C and increases the cytosolic Ca(2+) concentrations, which in turn triggers cellular responses such as stimulation of protein kinase C. This chain is Type-1 angiotensin II receptor (AGTR1), found in Cavia porcellus (Guinea pig).